We begin with the raw amino-acid sequence, 227 residues long: Guanylate kinase (227 aa).

In terms of domain architecture, Guanylate kinase-like spans 21–199 (GNLFMVVAPS…ALAELECIVA (179 aa)). ATP is bound at residue 28-35 (APSGAGKS).

It belongs to the guanylate kinase family.

The protein resides in the cytoplasm. It carries out the reaction GMP + ATP = GDP + ADP. Functionally, essential for recycling GMP and indirectly, cGMP. This chain is Guanylate kinase, found in Burkholderia mallei (strain ATCC 23344).